A 248-amino-acid chain; its full sequence is AA9 family lytic polysaccharide monooxygenase G (248 aa).

The first 21 residues, 1 to 21 (MLPNAAGLLVAGVVSLSGVAA), serve as a signal peptide directing secretion. A Cu(2+)-binding site is contributed by His22. The N-linked (GlcNAc...) asparagine glycan is linked to Asn58. A disulfide bridge links Cys77 with Cys195. His107 lines the Cu(2+) pocket. An O2-binding site is contributed by Gln190. Tyr192 serves as a coordination point for Cu(2+). N-linked (GlcNAc...) asparagine glycosylation is present at Asn203.

Belongs to the polysaccharide monooxygenase AA9 family. Cu(2+) serves as cofactor.

Its subcellular location is the secreted. The enzyme catalyses [(1-&gt;4)-beta-D-glucosyl]n+m + reduced acceptor + O2 = 4-dehydro-beta-D-glucosyl-[(1-&gt;4)-beta-D-glucosyl]n-1 + [(1-&gt;4)-beta-D-glucosyl]m + acceptor + H2O.. In terms of biological role, lytic polysaccharide monooxygenase (LPMO) that depolymerizes crystalline and amorphous polysaccharides via the oxidation of scissile alpha- or beta-(1-4)-glycosidic bonds, yielding C1 or C4 oxidation products. Catalysis by LPMOs requires the reduction of the active-site copper from Cu(II) to Cu(I) by a reducing agent and H(2)O(2) or O(2) as a cosubstrate. This chain is AA9 family lytic polysaccharide monooxygenase G, found in Malbranchea cinnamomea (Thermophilic fungus).